The sequence spans 587 residues: Mitogen-activated protein kinase 4 (587 aa).

In terms of domain architecture, Protein kinase spans 20 to 312 (FVDFQPLGFG…AEMGLQHPYM (293 aa)). ATP is bound by residues 26-34 (LGFGVNGLV) and K49. Residue D149 is the Proton acceptor of the active site. A Phosphoserine; by PAK1, PAK2 and PAK3 modification is found at S186. An SEG motif motif is present at residues 186–188 (SEG). Positions 328-333 (FRIEDE) match the FRIEDE motif motif. Composition is skewed to basic and acidic residues over residues 373 to 383 (QDASEVQRDPR) and 395 to 413 (VDPR…EQSH). A disordered region spans residues 373–413 (QDASEVQRDPRAGSAPLAEDVQVDPRKDSHSSSERFLEQSH). S434 bears the Phosphoserine mark. The interval 499–534 (STQGGPEHASPPADDPERRLSASPPGRPAPVDGGAS) is disordered.

The protein belongs to the protein kinase superfamily. CMGC Ser/Thr protein kinase family. MAP kinase subfamily. Homodimer. Heterodimer with ERK3/MAPK6. Interacts with (via FRIEDE motif) MAPKAPK5. Mg(2+) serves as cofactor. Phosphorylated at Ser-186 by PAK1, PAK2 and PAK3 resulting in catalytic activation. Phosphorylated by MAPKAPK5 at other sites. In terms of tissue distribution, high expression in heart and brain.

Its subcellular location is the cytoplasm. The protein localises to the nucleus. The catalysed reaction is L-seryl-[protein] + ATP = O-phospho-L-seryl-[protein] + ADP + H(+). It catalyses the reaction L-threonyl-[protein] + ATP = O-phospho-L-threonyl-[protein] + ADP + H(+). Activated by phosphorylation at Ser-186. Atypical MAPK protein. Phosphorylates microtubule-associated protein 2 (MAP2) and MAPKAPK5. The precise role of the complex formed with MAPKAPK5 is still unclear, but the complex follows a complex set of phosphorylation events: upon interaction with atypical MAPKAPK5, ERK4/MAPK4 is phosphorylated at Ser-186 and then mediates phosphorylation and activation of MAPKAPK5, which in turn phosphorylates ERK4/MAPK4. May promote entry in the cell cycle. The chain is Mitogen-activated protein kinase 4 (MAPK4) from Homo sapiens (Human).